Reading from the N-terminus, the 202-residue chain is Probable ATP-dependent Clp protease proteolytic subunit 3 (202 aa).

Residue Ser-101 is the Nucleophile of the active site. Residue His-126 is part of the active site.

It belongs to the peptidase S14 family. As to quaternary structure, fourteen ClpP subunits assemble into 2 heptameric rings which stack back to back to give a disk-like structure with a central cavity, resembling the structure of eukaryotic proteasomes.

It localises to the cytoplasm. The catalysed reaction is Hydrolysis of proteins to small peptides in the presence of ATP and magnesium. alpha-casein is the usual test substrate. In the absence of ATP, only oligopeptides shorter than five residues are hydrolyzed (such as succinyl-Leu-Tyr-|-NHMec, and Leu-Tyr-Leu-|-Tyr-Trp, in which cleavage of the -Tyr-|-Leu- and -Tyr-|-Trp bonds also occurs).. In terms of biological role, cleaves peptides in various proteins in a process that requires ATP hydrolysis. Has a chymotrypsin-like activity. Plays a major role in the degradation of misfolded proteins. This Synechocystis sp. (strain ATCC 27184 / PCC 6803 / Kazusa) protein is Probable ATP-dependent Clp protease proteolytic subunit 3.